The following is a 549-amino-acid chain: Putative acyl-CoA synthetase YngI (549 aa).

ATP contacts are provided by residues 198 to 206 (TSGTTGFPK), aspartate 423, arginine 438, and lysine 529.

This sequence belongs to the ATP-dependent AMP-binding enzyme family.

The sequence is that of Putative acyl-CoA synthetase YngI (yngI) from Bacillus subtilis (strain 168).